The primary structure comprises 309 residues: tRNA dimethylallyltransferase (309 aa).

10–17 (GPTAVGKT) provides a ligand contact to ATP. Residue 12-17 (TAVGKT) coordinates substrate. The tract at residues 35–38 (DSMQ) is interaction with substrate tRNA.

This sequence belongs to the IPP transferase family. In terms of assembly, monomer. Mg(2+) is required as a cofactor.

It catalyses the reaction adenosine(37) in tRNA + dimethylallyl diphosphate = N(6)-dimethylallyladenosine(37) in tRNA + diphosphate. Catalyzes the transfer of a dimethylallyl group onto the adenine at position 37 in tRNAs that read codons beginning with uridine, leading to the formation of N6-(dimethylallyl)adenosine (i(6)A). This is tRNA dimethylallyltransferase from Clostridium botulinum (strain Alaska E43 / Type E3).